The following is a 660-amino-acid chain: Peroxisomal acyl-coenzyme A oxidase 1 (660 aa).

Phosphoserine is present on Ser26. N6-acetyllysine is present on Lys65. Lys89 and Lys90 each carry N6-succinyllysine. Positions 139 and 178 each coordinate FAD. Lys216 is modified (N6-acetyllysine). Lys241 carries the N6-succinyllysine modification. Lys255, Lys267, and Lys272 each carry N6-acetyllysine. The residue at position 349 (Lys349) is an N6-succinyllysine. Glu421 serves as the catalytic Proton acceptor. N6-acetyllysine; alternate occurs at positions 437 and 446. 2 positions are modified to N6-succinyllysine; alternate: Lys437 and Lys446. Lys500 carries the N6-acetyllysine modification. The residue at position 512 (Lys512) is an N6-acetyllysine; alternate. Position 512 is an N6-succinyllysine; alternate (Lys512). N6-succinyllysine is present on Lys542. Residue Lys637 is modified to N6-acetyllysine; alternate. Residue Lys637 is modified to N6-succinyllysine; alternate. An N6-succinyllysine modification is found at Lys643. Ser649 carries the post-translational modification Phosphoserine. Lys651 is subject to N6-acetyllysine. An N6-succinyllysine modification is found at Lys654. Residues 658–660 carry the Microbody targeting signal motif; sequence SKL.

It belongs to the acyl-CoA oxidase family. Homodimer. Interacts with LONP2. The cofactor is FAD.

It is found in the peroxisome. The catalysed reaction is a 2,3-saturated acyl-CoA + O2 = a (2E)-enoyl-CoA + H2O2. It catalyses the reaction hexadecanoyl-CoA + O2 = (2E)-hexadecenoyl-CoA + H2O2. The enzyme catalyses dodecanoyl-CoA + O2 = (2E)-dodecenoyl-CoA + H2O2. It carries out the reaction octanoyl-CoA + O2 = (2E)-octenoyl-CoA + H2O2. The catalysed reaction is decanoyl-CoA + O2 = (2E)-decenoyl-CoA + H2O2. It catalyses the reaction tetradecanoyl-CoA + O2 = (2E)-tetradecenoyl-CoA + H2O2. The enzyme catalyses hexadecanedioyl-CoA + O2 = (2E)-hexadecenedioyl-CoA + H2O2. It carries out the reaction tetracosanoyl-CoA + O2 = (2E)-tetracosenoyl-CoA + H2O2. The catalysed reaction is glutaryl-CoA + O2 = (2E)-glutaconyl-CoA + H2O2. It catalyses the reaction hexanoyl-CoA + O2 = (2E)-hexenoyl-CoA + H2O2. The enzyme catalyses octadecanoyl-CoA + O2 = (2E)-octadecenoyl-CoA + H2O2. It carries out the reaction (5Z,8Z,11Z,14Z,17Z)-eicosapentaenoyl-CoA + O2 = (2E,5Z,8Z,11Z,14Z,17Z)-icosahexaenoyl-CoA + H2O2. The catalysed reaction is (6Z,9Z,12Z,15Z,18Z,21Z)-tetracosahexaenoyl-CoA + O2 = (2E,6Z,9Z,12Z,15Z,18Z,21Z)-tetracosaheptaenoyl-CoA + H2O2. It functions in the pathway lipid metabolism; peroxisomal fatty acid beta-oxidation. Its function is as follows. Involved in the initial and rate-limiting step of peroxisomal beta-oxidation of straight-chain saturated and unsaturated very-long-chain fatty acids. Catalyzes the desaturation of fatty acyl-CoAs such as palmitoyl-CoA (hexadecanoyl-CoA) to 2-trans-enoyl-CoAs ((2E)-enoyl-CoAs) such as (2E)-hexadecenoyl-CoA, and donates electrons directly to molecular oxygen (O(2)), thereby producing hydrogen peroxide (H(2)O(2)). The polypeptide is Peroxisomal acyl-coenzyme A oxidase 1 (Bos taurus (Bovine)).